The sequence spans 138 residues: NADPH-dependent 7-cyano-7-deazaguanine reductase (138 aa).

Residue Cys-53 is the Thioimide intermediate of the active site. Asp-60 serves as the catalytic Proton donor. Residues 75 to 77 and 94 to 95 contribute to the substrate site; these read VEL and HE.

This sequence belongs to the GTP cyclohydrolase I family. QueF type 1 subfamily.

The protein resides in the cytoplasm. It catalyses the reaction 7-aminomethyl-7-carbaguanine + 2 NADP(+) = 7-cyano-7-deazaguanine + 2 NADPH + 3 H(+). It participates in tRNA modification; tRNA-queuosine biosynthesis. Catalyzes the NADPH-dependent reduction of 7-cyano-7-deazaguanine (preQ0) to 7-aminomethyl-7-deazaguanine (preQ1). The chain is NADPH-dependent 7-cyano-7-deazaguanine reductase from Gloeothece citriformis (strain PCC 7424) (Cyanothece sp. (strain PCC 7424)).